Reading from the N-terminus, the 160-residue chain is MSGLGAPAEVLPPVAGMRLAVVATRWHAEITDALLAGALRAAKDAGLAAAPAVVRVSGAVELPVIAAALAARHDAVVALGVVIRGGTPHFDYVCQFVTAGLARVTLDARVPVGFGVLTCDTVEQARDRAGLPGSSEDKGREATLAALDTAAVLRDLELAG.

Residues W26, 59-61 (AVE), and 81-83 (VVI) contribute to the 5-amino-6-(D-ribitylamino)uracil site. 86-87 (GT) lines the (2S)-2-hydroxy-3-oxobutyl phosphate pocket. H89 functions as the Proton donor in the catalytic mechanism. F114 provides a ligand contact to 5-amino-6-(D-ribitylamino)uracil. Residue R128 participates in (2S)-2-hydroxy-3-oxobutyl phosphate binding.

It belongs to the DMRL synthase family.

The catalysed reaction is (2S)-2-hydroxy-3-oxobutyl phosphate + 5-amino-6-(D-ribitylamino)uracil = 6,7-dimethyl-8-(1-D-ribityl)lumazine + phosphate + 2 H2O + H(+). Its pathway is cofactor biosynthesis; riboflavin biosynthesis; riboflavin from 2-hydroxy-3-oxobutyl phosphate and 5-amino-6-(D-ribitylamino)uracil: step 1/2. Its function is as follows. Catalyzes the formation of 6,7-dimethyl-8-ribityllumazine by condensation of 5-amino-6-(D-ribitylamino)uracil with 3,4-dihydroxy-2-butanone 4-phosphate. This is the penultimate step in the biosynthesis of riboflavin. The chain is 6,7-dimethyl-8-ribityllumazine synthase from Frankia casuarinae (strain DSM 45818 / CECT 9043 / HFP020203 / CcI3).